The following is a 477-amino-acid chain: Cysteine--tRNA ligase (477 aa).

C29 contacts Zn(2+). Positions 31 to 41 (PTVQASPHIGH) match the 'HIGH' region motif. Zn(2+)-binding residues include C219, H244, and E248. The 'KMSKS' region motif lies at 275 to 279 (KMSKS). Position 278 (K278) interacts with ATP.

This sequence belongs to the class-I aminoacyl-tRNA synthetase family. In terms of assembly, monomer. It depends on Zn(2+) as a cofactor.

It localises to the cytoplasm. The enzyme catalyses tRNA(Cys) + L-cysteine + ATP = L-cysteinyl-tRNA(Cys) + AMP + diphosphate. The protein is Cysteine--tRNA ligase of Leifsonia xyli subsp. xyli (strain CTCB07).